The primary structure comprises 146 residues: Oxygen-independent coproporphyrinogen III oxidase (146 aa).

S-adenosyl-L-methionine is bound at residue Y54. [4Fe-4S] cluster contacts are provided by C60 and C64. F66 is a binding site for S-adenosyl-L-methionine. Residue C67 participates in [4Fe-4S] cluster binding. S-adenosyl-L-methionine-binding positions include 111 to 112 (GT) and E143.

The protein belongs to the anaerobic coproporphyrinogen-III oxidase family. Monomer. [4Fe-4S] cluster serves as cofactor.

Its subcellular location is the cytoplasm. The catalysed reaction is coproporphyrinogen III + 2 S-adenosyl-L-methionine = protoporphyrinogen IX + 2 5'-deoxyadenosine + 2 L-methionine + 2 CO2. It participates in porphyrin-containing compound metabolism; protoporphyrin-IX biosynthesis; protoporphyrinogen-IX from coproporphyrinogen-III (AdoMet route): step 1/1. Functionally, involved in the heme biosynthesis. Catalyzes the anaerobic oxidative decarboxylation of propionate groups of rings A and B of coproporphyrinogen III to yield the vinyl groups in protoporphyrinogen IX. In Mannheimia haemolytica (Pasteurella haemolytica), this protein is Oxygen-independent coproporphyrinogen III oxidase (hemN).